A 547-amino-acid polypeptide reads, in one-letter code: Glucose-6-phosphate isomerase (547 aa).

The active-site Proton donor is glutamate 354. Active-site residues include histidine 385 and lysine 513.

Belongs to the GPI family.

It localises to the cytoplasm. It catalyses the reaction alpha-D-glucose 6-phosphate = beta-D-fructose 6-phosphate. The protein operates within carbohydrate biosynthesis; gluconeogenesis. It participates in carbohydrate degradation; glycolysis; D-glyceraldehyde 3-phosphate and glycerone phosphate from D-glucose: step 2/4. Its function is as follows. Catalyzes the reversible isomerization of glucose-6-phosphate to fructose-6-phosphate. The polypeptide is Glucose-6-phosphate isomerase (Erwinia tasmaniensis (strain DSM 17950 / CFBP 7177 / CIP 109463 / NCPPB 4357 / Et1/99)).